The following is a 122-amino-acid chain: MARLAGVDLPRNKRMEVALTYIYGIGPTSAKQLLEKTEISPDLRTDALTDDQVAKLRDAIEAEYTVEGDLRRQVQADIRRKIEIGSYQGLRHRRGLPVRGQRTKTNARTRKGPKKTIAGKKK.

A disordered region spans residues 93 to 122 (RRGLPVRGQRTKTNARTRKGPKKTIAGKKK).

It belongs to the universal ribosomal protein uS13 family. As to quaternary structure, part of the 30S ribosomal subunit. Forms a loose heterodimer with protein S19. Forms two bridges to the 50S subunit in the 70S ribosome.

In terms of biological role, located at the top of the head of the 30S subunit, it contacts several helices of the 16S rRNA. In the 70S ribosome it contacts the 23S rRNA (bridge B1a) and protein L5 of the 50S subunit (bridge B1b), connecting the 2 subunits; these bridges are implicated in subunit movement. Contacts the tRNAs in the A and P-sites. The protein is Small ribosomal subunit protein uS13 of Corynebacterium kroppenstedtii (strain DSM 44385 / JCM 11950 / CIP 105744 / CCUG 35717).